Reading from the N-terminus, the 411-residue chain is uncharacterized protein (411 aa).

The 180-residue stretch at 20-199 (FLYFDFDAFF…LPITEIPGIG (180 aa)) folds into the UmuC domain.

Belongs to the DNA polymerase type-Y family.

This is an uncharacterized protein from Mycoplasma genitalium (strain ATCC 33530 / DSM 19775 / NCTC 10195 / G37) (Mycoplasmoides genitalium).